The primary structure comprises 575 residues: Hemagglutinin-neuraminidase (575 aa).

The segment covering Met1–Ser10 has biased composition (basic and acidic residues). The segment at Met1–Ala24 is disordered. Residues Met1–Leu37 lie on the Intravirion side of the membrane. The interval Ser10–Thr14 is incorporation in virion. Positions Tyr11–Leu23 are enriched in polar residues. Residues Leu38–Ile58 traverse the membrane as a helical segment. The segment at Ser59–Ser140 is involved in interaction with F protein. Topologically, residues Ser59 to Ser575 are virion surface. Residue Asn77 is glycosylated (N-linked (GlcNAc...) asparagine; by host). Disulfide bonds link Cys192/Cys216, Cys258/Cys271, Cys357/Cys469, and Cys463/Cys473. Residues Asn254 to Ser259 are involved in neuraminidase activity. Asn499 and Asn511 each carry an N-linked (GlcNAc...) asparagine; by host glycan. An intrachain disulfide couples Cys535 to Cys544.

This sequence belongs to the paramyxoviruses hemagglutinin-neuraminidase family. In terms of assembly, homotetramer; composed of disulfide-linked homodimers. Interacts with F protein trimer. Post-translationally, N-glycosylated; glycans consist of a mixture of high mannose-type oligosaccharides and of complex-type oligosaccharides.

The protein localises to the virion membrane. Its subcellular location is the host cell membrane. It catalyses the reaction Hydrolysis of alpha-(2-&gt;3)-, alpha-(2-&gt;6)-, alpha-(2-&gt;8)- glycosidic linkages of terminal sialic acid residues in oligosaccharides, glycoproteins, glycolipids, colominic acid and synthetic substrates.. Attaches the virus to sialic acid-containing cell receptors and thereby initiating infection. Binding of HN protein to the receptor induces a conformational change that allows the F protein to trigger virion/cell membranes fusion. Its function is as follows. Neuraminidase activity ensures the efficient spread of the virus by dissociating the mature virions from the neuraminic acid containing glycoproteins. In Sendai virus (strain Fushimi) (SeV), this protein is Hemagglutinin-neuraminidase (HN).